We begin with the raw amino-acid sequence, 27 residues long: Protamine-B (27 aa).

The interval 1–27 (ARRRRRSSRPQRRRRRRRHGRRRRGRR) is disordered.

Testis.

Its subcellular location is the nucleus. It is found in the chromosome. Its function is as follows. Protamines substitute for histones in the chromatin of sperm during the haploid phase of spermatogenesis. They compact sperm DNA into a highly condensed, stable and inactive complex. This chain is Protamine-B, found in Acipenser stellatus (Sevruga).